Consider the following 358-residue polypeptide: Uroporphyrinogen decarboxylase (358 aa).

Substrate-binding positions include 36–40 (RQAGR), D85, Y160, S215, and H338.

The protein belongs to the uroporphyrinogen decarboxylase family. As to quaternary structure, homodimer.

It localises to the cytoplasm. The enzyme catalyses uroporphyrinogen III + 4 H(+) = coproporphyrinogen III + 4 CO2. It functions in the pathway porphyrin-containing compound metabolism; protoporphyrin-IX biosynthesis; coproporphyrinogen-III from 5-aminolevulinate: step 4/4. Its function is as follows. Catalyzes the decarboxylation of four acetate groups of uroporphyrinogen-III to yield coproporphyrinogen-III. The chain is Uroporphyrinogen decarboxylase from Corynebacterium glutamicum (strain R).